Reading from the N-terminus, the 72-residue chain is ATP synthase subunit c (72 aa).

Transmembrane regions (helical) follow at residues A4–I24 and L46–F66.

It belongs to the ATPase C chain family. In terms of assembly, F-type ATPases have 2 components, F(1) - the catalytic core - and F(0) - the membrane proton channel. F(1) has five subunits: alpha(3), beta(3), gamma(1), delta(1), epsilon(1). F(0) has three main subunits: a(1), b(2) and c(10-14). The alpha and beta chains form an alternating ring which encloses part of the gamma chain. F(1) is attached to F(0) by a central stalk formed by the gamma and epsilon chains, while a peripheral stalk is formed by the delta and b chains.

It localises to the cell membrane. In terms of biological role, f(1)F(0) ATP synthase produces ATP from ADP in the presence of a proton or sodium gradient. F-type ATPases consist of two structural domains, F(1) containing the extramembraneous catalytic core and F(0) containing the membrane proton channel, linked together by a central stalk and a peripheral stalk. During catalysis, ATP synthesis in the catalytic domain of F(1) is coupled via a rotary mechanism of the central stalk subunits to proton translocation. Key component of the F(0) channel; it plays a direct role in translocation across the membrane. A homomeric c-ring of between 10-14 subunits forms the central stalk rotor element with the F(1) delta and epsilon subunits. The polypeptide is ATP synthase subunit c (Syntrophomonas wolfei subsp. wolfei (strain DSM 2245B / Goettingen)).